The chain runs to 326 residues: Aldo-keto reductase family 1 member D1 (326 aa).

NADP(+) is bound by residues glycine 22–tyrosine 26 and aspartate 53. Substrate is bound at residue tyrosine 26. Residues tyrosine 58, tryptophan 89, glutamate 120, and tyrosine 132 each coordinate substrate. Residue tyrosine 58 is the Proton donor of the active site. NADP(+) contacts are provided by residues serine 169–asparagine 170, glutamine 193, and tyrosine 219–threonine 224. Tryptophan 230 contacts substrate. Lysine 273–asparagine 283 contributes to the NADP(+) binding site.

The protein belongs to the aldo/keto reductase family.

The protein localises to the cytoplasm. It carries out the reaction 5beta-cholestan-3-one + NADP(+) = cholest-4-en-3-one + NADPH + H(+). The catalysed reaction is 4,5beta-dihydrocortisone + NADP(+) = cortisone + NADPH + H(+). The enzyme catalyses cortisol + NADPH + H(+) = 5beta-dihydrocortisol + NADP(+). It catalyses the reaction corticosterone + NADPH + H(+) = 5beta-dihydrocorticosterone + NADP(+). It carries out the reaction 7alpha,12alpha-dihydroxycholest-4-en-3-one + NADPH + H(+) = 7alpha,12alpha-dihydroxy-5beta-cholestan-3-one + NADP(+). The catalysed reaction is 7alpha-hydroxycholest-4-en-3-one + NADPH + H(+) = 7alpha-hydroxy-5beta-cholestan-3-one + NADP(+). The enzyme catalyses epitestosterone + NADPH + H(+) = 5beta-dihydroepitestosterone + NADP(+). It catalyses the reaction androst-4-ene-3,17-dione + NADPH + H(+) = 5beta-androstane-3,17-dione + NADP(+). It carries out the reaction progesterone + NADPH + H(+) = 5beta-pregnan-3,20-dione + NADP(+). The catalysed reaction is 21-hydroxyprogesterone + NADPH + H(+) = 5beta-dihydrodeoxycorticosterone + NADP(+). The enzyme catalyses aldosterone + NADPH + H(+) = 5beta-dihydroaldosterone + NADP(+). It catalyses the reaction 17beta-hydroxyandrosta-1,4-dien-3-one + NADPH + H(+) = 17beta-hydroxy-5beta-androst-1-en-3-one + NADP(+). It carries out the reaction 17beta-hydroxyestr-4-en-3-one + NADPH + H(+) = 17beta-hydroxy-5beta-estran-3-one + NADP(+). The catalysed reaction is 5beta-dihydrotestosterone + NADP(+) = testosterone + NADPH + H(+). The enzyme catalyses androst-4-ene-3,11,17-trione + NADPH + H(+) = 17beta-hydroxyandrost-4-ene-3,11-dione + NADP(+). Subject to inhibition by high substrate concentrations. Inhibited by testosterone concentrations above 10 uM. Inhibited by the primary and secondary bile acids chenodeoxycholic acid and ursodeoxycholic acid. Functionally, catalyzes the stereospecific NADPH-dependent reduction of the C4-C5 double bond of bile acid intermediates and steroid hormones carrying a delta(4)-3-one structure to yield an A/B cis-ring junction. This cis-configuration is crucial for bile acid biosynthesis and plays important roles in steroid metabolism. Capable of reducing a broad range of delta-(4)-3-ketosteroids from C18 (such as, 17beta-hydroxyestr-4-en-3-one) to C27 (such as, 7alpha-hydroxycholest-4-en-3-one). This chain is Aldo-keto reductase family 1 member D1 (AKR1D1), found in Oryctolagus cuniculus (Rabbit).